We begin with the raw amino-acid sequence, 103 residues long: MMGSKMASASRVVQVVKPHTPLIRFPDRRDNPKPNVSEALRSAGLPSHSSVISQHSKGSKSPDLLMYQGPPDTAEIIKTLPQKYRRKLVSQEEMEFIQRGGPE.

M1 bears the N-acetylmethionine mark. Position 5 is an N6-succinyllysine (K5). Positions 20–69 (TPLIRFPDRRDNPKPNVSEALRSAGLPSHSSVISQHSKGSKSPDLLMYQG) are disordered. Over residues 47–56 (SHSSVISQHS) the composition is skewed to polar residues. S49, S61, and S90 each carry phosphoserine.

It belongs to the alpha-ketoglutarate dehydrogenase component 4 family. In terms of assembly, component of the 2-oxoglutarate dehydrogenase complex (OGDHC), composed of OGDH (2-oxoglutarate dehydrogenase; also called E1 subunit), DLST (dihydrolipoamide succinyltransferase; also called E2 subunit) and DLD (dihydrolipoamide dehydrogenase; also called E3 subunit), and the assembly factor KGD4. Within OGDHC complex, interacts (via N-terminus) with E3 subunit and (via C-terminus) with E2 subunit.

It localises to the mitochondrion. Its function is as follows. Molecular adapter that is necessary to form a stable 2-oxoglutarate dehydrogenase enzyme complex (OGDHC). Enables the specific recruitment of E3 subunit to E2 subunit in the 2-oxoglutarate dehydrogenase complex (OGDHC). The chain is Alpha-ketoglutarate dehydrogenase component 4 from Homo sapiens (Human).